The chain runs to 248 residues: UPF0246 protein RPR_00055 (248 aa).

Belongs to the UPF0246 family.

The protein is UPF0246 protein RPR_00055 of Rickettsia peacockii (strain Rustic).